We begin with the raw amino-acid sequence, 184 residues long: Probable RNA 2'-phosphotransferase (184 aa).

The protein belongs to the KptA/TPT1 family.

Its function is as follows. Removes the 2'-phosphate from RNA via an intermediate in which the phosphate is ADP-ribosylated by NAD followed by a presumed transesterification to release the RNA and generate ADP-ribose 1''-2''-cyclic phosphate (APPR&gt;P). May function as an ADP-ribosylase. The protein is Probable RNA 2'-phosphotransferase of Burkholderia pseudomallei (strain K96243).